We begin with the raw amino-acid sequence, 352 residues long: Histidine biosynthesis bifunctional protein HisB (352 aa).

The histidinol-phosphatase stretch occupies residues M1–F164. D9 serves as the catalytic Nucleophile. Mg(2+)-binding residues include D9 and D11. Catalysis depends on D11, which acts as the Proton donor. C93, H95, C101, and C103 together coordinate Zn(2+). D130 is a Mg(2+) binding site. Positions R165–I352 are imidazoleglycerol-phosphate dehydratase.

In the N-terminal section; belongs to the histidinol-phosphatase family. It in the C-terminal section; belongs to the imidazoleglycerol-phosphate dehydratase family. The cofactor is Mg(2+). Requires Zn(2+) as cofactor.

Its subcellular location is the cytoplasm. It catalyses the reaction D-erythro-1-(imidazol-4-yl)glycerol 3-phosphate = 3-(imidazol-4-yl)-2-oxopropyl phosphate + H2O. The enzyme catalyses L-histidinol phosphate + H2O = L-histidinol + phosphate. It functions in the pathway amino-acid biosynthesis; L-histidine biosynthesis; L-histidine from 5-phospho-alpha-D-ribose 1-diphosphate: step 6/9. It participates in amino-acid biosynthesis; L-histidine biosynthesis; L-histidine from 5-phospho-alpha-D-ribose 1-diphosphate: step 8/9. This is Histidine biosynthesis bifunctional protein HisB from Campylobacter jejuni subsp. doylei (strain ATCC BAA-1458 / RM4099 / 269.97).